A 249-amino-acid polypeptide reads, in one-letter code: Zinc finger protein CG30 (249 aa).

Residues 8–66 form an RING-type zinc finger; that stretch reads CHICCSVGEIKNYFLQPVDAITILPIVELHTCRHQLCVMCVRKIAQRGRDKRVECPMCR.

The sequence is that of Zinc finger protein CG30 (CG30) from Orgyia pseudotsugata (Douglas-fir tussock moth).